The following is a 220-amino-acid chain: Cell surface glycolipoprotein MPB83 (220 aa).

A signal peptide spans 1-24 (MINVQAKPAAAASLAAIAIAFLAG). Residue C25 is the site of N-palmitoyl cysteine attachment. C25 carries the S-diacylglycerol cysteine lipid modification. Residues T48 and T49 are each glycosylated (O-linked (Man...) threonine). One can recognise an FAS1 domain in the interval 83–215 (QDPVATAASN…ATVYMIDTVL (133 aa)).

Interacts with host (human) TLR2. Post-translationally, O-glycosylated. Contains 0-3 mannose residues attached to residues 48-49 in various configurations; the dominant glycoform is Thr-48(Man)/Thr-49(Man2) with an unusual Man(1-&gt;3)Man linkage, but Thr48(Man3)/Thr49(Man0) through to Thr48(Man0/)Thr49(Man3) are also seen. When isolated from culture filtrate runs as 25 and 23 kDa proteins; the larger protein is much less abundant, mostly associated with the cell and starts at residue 28, the shorter is more abundant and starts at residue 48.

It is found in the cell membrane. The protein resides in the secreted. The protein localises to the cell wall. In terms of biological role, induces expression of human (host) matrix metalloproteinase-9 (MMP9) in a TLR1/TLR2-dependent fashion; the acylated 20 first mature residues (residues 25-40) induce the most expression, but whole recombinant protein (non-acylated and non-glycosylated), and mannosylated but not acylated protein (residues 26-220) also induce expression. This is Cell surface glycolipoprotein MPB83 (mpb83) from Mycobacterium bovis (strain ATCC BAA-935 / AF2122/97).